Consider the following 203-residue polypeptide: Fucoxanthin-chlorophyll a-c binding protein, chloroplastic (203 aa).

The N-terminal 30 residues, 1–30 (MKLAIAALLAGSAAAFAPAQSGKASTALNM), are a transit peptide targeting the chloroplast.

Belongs to the fucoxanthin chlorophyll protein family. As to quaternary structure, the LHC complex of chromophytic algae is composed of fucoxanthin, chlorophyll A and C bound non-covalently by fucoxanthin chlorophyll proteins (FCPs). The ratio of pigments in this LHC is; fucoxanthin: chlorophyll C: chlorophyll A; (0.6-1): (0.1-0.3): (1).

The protein resides in the plastid. It is found in the chloroplast thylakoid membrane. Functionally, the light-harvesting complex (LHC) functions as a light receptor, it captures and delivers excitation energy to photosystems with which it is closely associated. Energy is transferred from the carotenoid and chlorophyll C (or B) to chlorophyll A and the photosynthetic reaction centers where it is used to synthesize ATP and reducing power. In Trieres chinensis (Marine centric diatom), this protein is Fucoxanthin-chlorophyll a-c binding protein, chloroplastic (FCPA).